An 811-amino-acid chain; its full sequence is Myb-like DNA-binding protein BAS1 (811 aa).

One can recognise a Myb-like domain in the interval 34–110; sequence HRKNGRNSWS…DVRKRWTGSL (77 aa). 2 consecutive HTH myb-type domains span residues 111–165 and 166–218; these read DPNL…GPGS and KGRL…TMVV. 2 DNA-binding regions (H-T-H motif) span residues 138 to 161 and 191 to 214; these read WLSI…IEVL and WRKI…RKII. Positions 237-264 are enriched in basic and acidic residues; that stretch reads DMTDGKLRQHPIADSDIRSDSTPNKEEQ. Disordered regions lie at residues 237 to 320, 348 to 379, 535 to 713, and 782 to 811; these read DMTD…SAPP, SQMN…DEHM, ATSH…LRDE, and LHNE…LNPS. Residues 265–275 are compositionally biased toward low complexity; the sequence is LQLSQQNNPSL. Over residues 282 to 298 the composition is skewed to basic and acidic residues; sequence NVKENESSKLPRLKDND. Polar residues-rich tracts occupy residues 348 to 366, 535 to 613, and 653 to 664; these read SQMN…QTSL, ATSH…TSGS, and LNPSPNSVRSNG. Basic and acidic residues predominate over residues 782 to 794; that stretch reads LHNEAKKTSEHDM.

In terms of assembly, monomer.

It is found in the nucleus. Functionally, activates HIS4 transcription only in combination with PHO2/BAS2. BAS1 is also involved in the regulation of the purine biosynthesis pathway. In Saccharomyces cerevisiae (strain ATCC 204508 / S288c) (Baker's yeast), this protein is Myb-like DNA-binding protein BAS1 (BAS1).